The sequence spans 70 residues: MTTIKVKENEPFEVAMRRFKRTIEKTGLLTELRAREFYEKPTAERKRKLAAAVKRTYKRLRSQLLPPKLY.

Belongs to the bacterial ribosomal protein bS21 family.

In Nitrosospira multiformis (strain ATCC 25196 / NCIMB 11849 / C 71), this protein is Small ribosomal subunit protein bS21.